The following is a 148-amino-acid chain: Nucleoside diphosphate kinase (148 aa).

ATP is bound by residues K9, F57, R85, T91, R102, and N112. A Phosphothreonine modification is found at T91. H115 serves as the catalytic Pros-phosphohistidine intermediate. The residue at position 122 (S122) is a Phosphoserine.

The protein belongs to the NDK family. As to quaternary structure, homotetramer. The cofactor is Mg(2+).

It is found in the cytoplasm. The enzyme catalyses a 2'-deoxyribonucleoside 5'-diphosphate + ATP = a 2'-deoxyribonucleoside 5'-triphosphate + ADP. It carries out the reaction a ribonucleoside 5'-diphosphate + ATP = a ribonucleoside 5'-triphosphate + ADP. Functionally, major role in the synthesis of nucleoside triphosphates other than ATP. The ATP gamma phosphate is transferred to the NDP beta phosphate via a ping-pong mechanism, using a phosphorylated active-site intermediate. The polypeptide is Nucleoside diphosphate kinase (Bacillus licheniformis (strain ATCC 14580 / DSM 13 / JCM 2505 / CCUG 7422 / NBRC 12200 / NCIMB 9375 / NCTC 10341 / NRRL NRS-1264 / Gibson 46)).